The following is a 115-amino-acid chain: Type 3 secretion system chaperone YscG (115 aa).

It belongs to the YscG family. As to quaternary structure, component of the heterodimeric YscE-YscG chaperone. The YscE-YscG chaperone forms a stable ternary complex with YscF/SctF.

It localises to the cytoplasm. Functionally, chaperone of the type III secretion system (T3SS), also called injectisome, which is used to inject bacterial effector proteins into eukaryotic host cells. Along with YscE, prevents premature polymerization of the YscF/SctF needle protein within the cytoplasm. Required for Yop secretion. The polypeptide is Type 3 secretion system chaperone YscG (Yersinia enterocolitica).